Consider the following 224-residue polypeptide: Uracil-DNA glycosylase (224 aa).

Catalysis depends on aspartate 61, which acts as the Proton acceptor.

Belongs to the uracil-DNA glycosylase (UDG) superfamily. UNG family.

The protein localises to the cytoplasm. It carries out the reaction Hydrolyzes single-stranded DNA or mismatched double-stranded DNA and polynucleotides, releasing free uracil.. In terms of biological role, excises uracil residues from the DNA which can arise as a result of misincorporation of dUMP residues by DNA polymerase or due to deamination of cytosine. This Mannheimia succiniciproducens (strain KCTC 0769BP / MBEL55E) protein is Uracil-DNA glycosylase.